Reading from the N-terminus, the 207-residue chain is MSERLLVLVRHGQSEWNLKNLFTGWKDPDLTEQGVSEAKEAGRKLKAHGLTFDVAFTSELTRAQHTLKLILDELGQPGLPTSRNLALNERDYGDLSGLNKDDARAKWGEEQVHVWRRSYDVPPPGGESLKDTLARALPYYVQEILPGVLRGQRTLVAAHGNSLRALIMVLEKLTPEGILKRELATGVPIIYRLKADSTVESKLDLAG.

Substrate contacts are provided by residues 10-17 (RHGQSEWN), 23-24 (TG), arginine 62, 89-92 (ERDY), lysine 100, 116-117 (RR), and 160-161 (GN). Histidine 11 functions as the Tele-phosphohistidine intermediate in the catalytic mechanism. Glutamate 89 serves as the catalytic Proton donor/acceptor.

Belongs to the phosphoglycerate mutase family. BPG-dependent PGAM subfamily. In terms of assembly, homodimer.

The enzyme catalyses (2R)-2-phosphoglycerate = (2R)-3-phosphoglycerate. The protein operates within carbohydrate degradation; glycolysis; pyruvate from D-glyceraldehyde 3-phosphate: step 3/5. Functionally, catalyzes the interconversion of 2-phosphoglycerate and 3-phosphoglycerate. This Bradyrhizobium sp. (strain BTAi1 / ATCC BAA-1182) protein is 2,3-bisphosphoglycerate-dependent phosphoglycerate mutase.